Consider the following 121-residue polypeptide: Trypsin/alpha-amylase inhibitor CMX1/CMX3 (121 aa).

The first 24 residues, 1–24, serve as a signal peptide directing secretion; that stretch reads MAFKHQLILSTAILLAVLAAASAS.

Belongs to the protease inhibitor I6 (cereal trypsin/alpha-amylase inhibitor) family.

The protein resides in the secreted. The polypeptide is Trypsin/alpha-amylase inhibitor CMX1/CMX3 (Triticum aestivum (Wheat)).